The following is an 870-amino-acid chain: Suppressor of yeast profilin deletion (870 aa).

Positions 252-267 (SSSSKEVVPNNASPAS) are enriched in polar residues. 2 disordered regions span residues 252–298 (SSSS…RKSA) and 310–574 (SSSL…TLSS). A Glycyl lysine isopeptide (Lys-Gly) (interchain with G-Cter in ubiquitin) cross-link involves residue Lys256. Ser264 is subject to Phosphoserine. Over residues 283 to 292 (TEREKKSPQK) the composition is skewed to basic and acidic residues. The segment covering 310–323 (SSSLTHNDLMNNEF) has biased composition (polar residues). Ser331 bears the Phosphoserine mark. Basic residues predominate over residues 333–342 (KSKKSSHTLR). A compositionally biased stretch (polar residues) spans 367–378 (HIQASITETPNN). Positions 379-390 (SSTRVSSTATSS) are enriched in low complexity. Over residues 398–409 (PTYSSSKSNNWT) the composition is skewed to polar residues. At Thr416 the chain carries Phosphothreonine. The span at 473–485 (PISISQPPLQPQS) shows a compositional bias: low complexity. Phosphoserine occurs at positions 496 and 500. Polar residues predominate over residues 497–514 (PSISLPTATVDNQPSGQV). Thr577 carries the post-translational modification Phosphothreonine. Residues 609-869 (QFGLNASIAE…TLTTGNYHGL (261 aa)) enclose the MHD domain.

Belongs to the SYP1 family. As to quaternary structure, interacts with CDC3, CDC10, CDC11, CDC12, EDE1 and EPS15.

It localises to the bud neck. Functionally, multi-functional protein that contributes to the endocytic process, but also to events that occur at the neck during budding and/or cytokinesis. Plays a role as an endocytic adapters with membrane-tubulation activity that associates with transmembrane cargo proteins and initiates the formation of endocytic sites. Contributes to the stabilization of the nascent clathrin-coated pit. Also plays a role in late endocytosis by mediating vesiculation. Involved in the regulation of cell cycle-dependent dynamics of the septin cytoskeleton by promoting septin turnover in different cell cycle stages. May act through the RHO2 signaling pathway to repolarize cortical actin patches in profilin-deficient cells. The polypeptide is Suppressor of yeast profilin deletion (SYP1) (Saccharomyces cerevisiae (strain ATCC 204508 / S288c) (Baker's yeast)).